Reading from the N-terminus, the 607-residue chain is Hemagglutinin glycoprotein (607 aa).

Residues 1–38 are Intravirion-facing; that stretch reads MFSHQDKVGAFYKNNARANSSKLSLVTDEVEERRSPWF. A helical; Signal-anchor for type II membrane protein transmembrane segment spans residues 39 to 55; the sequence is LSILLILLVGILILLTI. Over 56 to 607 the chain is Virion surface; sequence TGIRFHQVVK…IRFSCDRLDP (552 aa). N-linked (GlcNAc...) asparagine; by host glycans are attached at residues asparagine 149, asparagine 276, asparagine 391, asparagine 422, asparagine 456, and asparagine 587.

Belongs to the paramyxoviruses hemagglutinin-neuraminidase family. Non-sialidase subfamily.

The protein localises to the virion membrane. Its subcellular location is the host membrane. Attaches the virus to cell receptors and thereby initiating infection. Binding of H protein to the receptor induces a conformational change that allows the F protein to trigger virion/cell membranes fusion. This chain is Hemagglutinin glycoprotein (H), found in Phocidae (true seals).